The chain runs to 289 residues: Leucine--tRNA ligase subunit beta (289 aa).

The short motif at Lys-45–Ser-49 is the 'KMSKS' region element. Residue Lys-48 coordinates ATP.

Belongs to the class-I aminoacyl-tRNA synthetase family. Seems to consist of an alpha chain and a beta chain.

It is found in the cytoplasm. The enzyme catalyses tRNA(Leu) + L-leucine + ATP = L-leucyl-tRNA(Leu) + AMP + diphosphate. This Aquifex aeolicus (strain VF5) protein is Leucine--tRNA ligase subunit beta (leuS').